The chain runs to 197 residues: Imidazoleglycerol-phosphate dehydratase (197 aa).

Belongs to the imidazoleglycerol-phosphate dehydratase family.

It localises to the cytoplasm. It carries out the reaction D-erythro-1-(imidazol-4-yl)glycerol 3-phosphate = 3-(imidazol-4-yl)-2-oxopropyl phosphate + H2O. It participates in amino-acid biosynthesis; L-histidine biosynthesis; L-histidine from 5-phospho-alpha-D-ribose 1-diphosphate: step 6/9. This is Imidazoleglycerol-phosphate dehydratase from Methylococcus capsulatus (strain ATCC 33009 / NCIMB 11132 / Bath).